The sequence spans 364 residues: UDP-N-acetylglucosamine--N-acetylmuramyl-(pentapeptide) pyrophosphoryl-undecaprenol N-acetylglucosamine transferase (364 aa).

Residues 10-12 (TGG), N124, R166, S196, and Q297 each bind UDP-N-acetyl-alpha-D-glucosamine.

It belongs to the glycosyltransferase 28 family. MurG subfamily.

It is found in the cell membrane. The catalysed reaction is di-trans,octa-cis-undecaprenyl diphospho-N-acetyl-alpha-D-muramoyl-L-alanyl-D-glutamyl-meso-2,6-diaminopimeloyl-D-alanyl-D-alanine + UDP-N-acetyl-alpha-D-glucosamine = di-trans,octa-cis-undecaprenyl diphospho-[N-acetyl-alpha-D-glucosaminyl-(1-&gt;4)]-N-acetyl-alpha-D-muramoyl-L-alanyl-D-glutamyl-meso-2,6-diaminopimeloyl-D-alanyl-D-alanine + UDP + H(+). Its pathway is cell wall biogenesis; peptidoglycan biosynthesis. Functionally, cell wall formation. Catalyzes the transfer of a GlcNAc subunit on undecaprenyl-pyrophosphoryl-MurNAc-pentapeptide (lipid intermediate I) to form undecaprenyl-pyrophosphoryl-MurNAc-(pentapeptide)GlcNAc (lipid intermediate II). The polypeptide is UDP-N-acetylglucosamine--N-acetylmuramyl-(pentapeptide) pyrophosphoryl-undecaprenol N-acetylglucosamine transferase (Caldanaerobacter subterraneus subsp. tengcongensis (strain DSM 15242 / JCM 11007 / NBRC 100824 / MB4) (Thermoanaerobacter tengcongensis)).